Consider the following 396-residue polypeptide: S-adenosylmethionine synthase 1 (396 aa).

Residue Glu-13 participates in Mg(2+) binding. ATP is bound at residue His-19. K(+) is bound at residue Glu-47. Positions 60 and 103 each coordinate L-methionine. Residues 171-173, 239-242, Asp-250, 256-257, Ala-273, Lys-277, and Lys-281 contribute to the ATP site; these read DGK, SGRF, and RK. Asp-250 serves as a coordination point for L-methionine. Lys-281 serves as a coordination point for L-methionine.

Belongs to the AdoMet synthase family. As to quaternary structure, homotetramer. Mn(2+) serves as cofactor. Requires Mg(2+) as cofactor. Co(2+) is required as a cofactor. The cofactor is K(+).

It localises to the cytoplasm. It carries out the reaction L-methionine + ATP + H2O = S-adenosyl-L-methionine + phosphate + diphosphate. The protein operates within amino-acid biosynthesis; S-adenosyl-L-methionine biosynthesis; S-adenosyl-L-methionine from L-methionine: step 1/1. Catalyzes the formation of S-adenosylmethionine from methionine and ATP. The reaction comprises two steps that are both catalyzed by the same enzyme: formation of S-adenosylmethionine (AdoMet) and triphosphate, and subsequent hydrolysis of the triphosphate. May be involved in the synthesis of betain in response to abiotic stress such as high salinity. The polypeptide is S-adenosylmethionine synthase 1 (SAMS1) (Beta vulgaris (Sugar beet)).